The following is a 98-amino-acid chain: UPF0235 protein Asuc_1977 (98 aa).

It belongs to the UPF0235 family.

The sequence is that of UPF0235 protein Asuc_1977 from Actinobacillus succinogenes (strain ATCC 55618 / DSM 22257 / CCUG 43843 / 130Z).